The primary structure comprises 484 residues: FAD-dependent monooxygenase aurC (484 aa).

A signal peptide spans 1–21; that stretch reads MGAYSFRVIIVGGSITGMTLA. FAD-binding residues include E35, G49, and R108. The active site involves Y216. 2 residues coordinate FAD: D308 and G321. The chain crosses the membrane as a helical span at residues 451-471; that stretch reads FAVASLIVLIVVLARALDSPA.

It belongs to the paxM FAD-dependent monooxygenase family. FAD is required as a cofactor.

The protein localises to the membrane. The protein operates within polyketide biosynthesis. FAD-dependent monooxygenase; part of the gene cluster that mediates the biosynthesis of aurovertins, fungal polyketides that exhibit potent inhibition of adenosine triphosphate synthase. Tha biosynthesis starts with the HR-PKS aurA that selects propionate as the starter unit; synthesizes a hexa-ene chain through the repeated functions of the KR and DH domains in the first six iterations; selectively introduces three alpha-methyl substitutions at C4, C6, and C16 using the S-adensylmethionine-dependent cMET; and shuts off KR and DH in the last three iterations to afford a 1,3,5-triketo portion that can undergo intramolecular cyclization to yield the alpha-pyrone intermediate. AurE may act as a cyclase and enhances the rate of pyrone formation and product release of aurA. The methyltransferase aurB then methylates the C17 hydroxyl group. C17 methylation is required to initiate epoxidation by the downstream monooxygenase aurC. The monooxygenase aurC and the epoxide hydrolase aurD can iteratively transform the terminal triene portion of the methylated precursor into the dioxabicyclo[3.2.1]octane scaffold of aurovertin E. Epoxidation modifications of the precursor occur in two separate steps; bis-epoxidation of the two terminal olefins takes place first, followed by another epoxidation that occurs at C7-C8 after tetrahydrofuran formation. The O-acyltransferase aurG converts aurovertin E to aurovertin A. This chain is FAD-dependent monooxygenase aurC, found in Calcarisporium arbuscula (Dendryphion arbuscula).